The chain runs to 23 residues: Dahlein-4.3 (23 aa).

As to expression, expressed by the skin dorsal glands.

Its subcellular location is the secreted. Has no antimicrobial activity. The sequence is that of Dahlein-4.3 from Ranoidea dahlii (Dahl's aquatic frog).